Here is a 340-residue protein sequence, read N- to C-terminus: N-acetyl-gamma-glutamyl-phosphate reductase (340 aa).

Cys-146 is a catalytic residue.

It belongs to the NAGSA dehydrogenase family. Type 1 subfamily.

Its subcellular location is the cytoplasm. It carries out the reaction N-acetyl-L-glutamate 5-semialdehyde + phosphate + NADP(+) = N-acetyl-L-glutamyl 5-phosphate + NADPH + H(+). It participates in amino-acid biosynthesis; L-arginine biosynthesis; N(2)-acetyl-L-ornithine from L-glutamate: step 3/4. Catalyzes the NADPH-dependent reduction of N-acetyl-5-glutamyl phosphate to yield N-acetyl-L-glutamate 5-semialdehyde. In Streptococcus sanguinis (strain SK36), this protein is N-acetyl-gamma-glutamyl-phosphate reductase.